The chain runs to 986 residues: Mediator of RNA polymerase II transcription subunit 24 (986 aa).

Short sequence motifs (LXXLL motif) lie at residues 128–132 (LNWLL), 341–345 (LTPLL), 445–449 (LDLLL), 554–558 (LVALL), 785–789 (LPNLL), and 855–859 (LMRLL).

Belongs to the Mediator complex subunit 24 family. As to quaternary structure, component of the Mediator complex.

It localises to the nucleus. Its function is as follows. Component of the Mediator complex, a coactivator involved in the regulated transcription of nearly all RNA polymerase II-dependent genes. Mediator functions as a bridge to convey information from gene-specific regulatory proteins to the basal RNA polymerase II transcription machinery. Mediator is recruited to promoters by direct interactions with regulatory proteins and serves as a scaffold for the assembly of a functional preinitiation complex with RNA polymerase II and the general transcription factors. This is Mediator of RNA polymerase II transcription subunit 24 (MED24) from Gallus gallus (Chicken).